We begin with the raw amino-acid sequence, 304 residues long: MAIISEVEEESSSSRPMIFPFRATLSSANPLGFLEKVFDFLGEQSDFLKKPSAEDEIVVAVRAAKEKLKKAEKKKAEKESVKPVEKKAEKEIVKLVEKKVEKESVKPTIAASSAEPIEVEKPKEEEEKKESGPIVPNKGNGTDLENYSWIQNLQEVTVNIPVPTGTKARTVVCEIKKNRLKVGLKGQDPIVDGELYRSVKPDDCYWNIEDQKVISILLTKSDQMEWWKCCVKGEPEIDTQKVEPETSKLGDLDPETRSTVEKMMFDQRQKQMGLPTSEELQKQEILKKFMSEHPEMDFSNAKFN.

Alanine 2 carries the post-translational modification N-acetylalanine. The stretch at 54–106 (EDEIVVAVRAAKEKLKKAEKKKAEKESVKPVEKKAEKEIVKLVEKKVEKESVK) forms a coiled coil. Positions 111–141 (ASSAEPIEVEKPKEEEEKKESGPIVPNKGNG) are disordered. A compositionally biased stretch (basic and acidic residues) spans 118–131 (EVEKPKEEEEKKES). One can recognise a CS domain in the interval 142–231 (TDLENYSWIQ…DQMEWWKCCV (90 aa)).

In terms of tissue distribution, expressed in all seedling tissues with highest expression levels at the root tip.

The protein resides in the cytoplasm. Its subcellular location is the cytoplasmic granule. Its function is as follows. Small heat shock protein required for the establishment of auxin gradients and for patterning of the apical domain of the embryo. Involved in the specification of the cotyledon primordia. Also required for normal inflorescence and floral meristem function, normal developmental patterning and thermotolerance. Acts as a molecular chaperone. The chain is Protein BOBBER 1 (BOB1) from Arabidopsis thaliana (Mouse-ear cress).